The primary structure comprises 212 residues: Thymidylate kinase (212 aa).

10–17 (GLEGAGKT) serves as a coordination point for ATP.

This sequence belongs to the thymidylate kinase family.

The catalysed reaction is dTMP + ATP = dTDP + ADP. In terms of biological role, phosphorylation of dTMP to form dTDP in both de novo and salvage pathways of dTTP synthesis. The polypeptide is Thymidylate kinase (Cronobacter sakazakii (strain ATCC BAA-894) (Enterobacter sakazakii)).